Here is a 138-residue protein sequence, read N- to C-terminus: Holo-[acyl-carrier-protein] synthase (138 aa).

Mg(2+) contacts are provided by D8 and E56.

The protein belongs to the P-Pant transferase superfamily. AcpS family. Mg(2+) serves as cofactor.

It is found in the cytoplasm. The enzyme catalyses apo-[ACP] + CoA = holo-[ACP] + adenosine 3',5'-bisphosphate + H(+). Transfers the 4'-phosphopantetheine moiety from coenzyme A to a Ser of acyl-carrier-protein. The polypeptide is Holo-[acyl-carrier-protein] synthase (Clostridium novyi (strain NT)).